Consider the following 509-residue polypeptide: Leucine-rich repeat-containing protein 14 (509 aa).

The stretch at 111–146 (RQRLRLLDMTGMQEEGLEQNPDTMSLWSRTVTLAKA) is one LRR 1; degenerate repeat. The stretch at 210-234 (RLQCRDFRAEELSLRSTAGLLELLN) is one LRR 2; degenerate repeat. The LRR 3; degenerate repeat unit spans residues 235–262 (PGSVRQIDLRFNNLGLSGLNVLLPHMAK). One copy of the LRR 4; degenerate repeat lies at 263-298 (FSHLQSLKLPYSNVDVRRLSPVMEEGLQSFASQLGQ). LRR repeat units lie at residues 299-323 (LGAL…LGGL), 324-355 (QRPL…SSLR), 356-374 (KLDL…PFLH), 380-407 (SGHL…ILCR), and 408-432 (CSWL…VLQN).

It belongs to the PRAME family. LRRC14 subfamily.

The protein localises to the cytoplasm. This is Leucine-rich repeat-containing protein 14 from Xenopus laevis (African clawed frog).